A 336-amino-acid polypeptide reads, in one-letter code: 3-isopropylmalate dehydrogenase (336 aa).

Substrate-binding residues include arginine 87, arginine 97, arginine 121, and aspartate 211. Mg(2+) is bound by residues aspartate 211, aspartate 235, and aspartate 239. 271–283 (GSAPDIAGQGIAD) is an NAD(+) binding site.

Belongs to the isocitrate and isopropylmalate dehydrogenases family. LeuB type 2 subfamily. In terms of assembly, homodimer. Mg(2+) is required as a cofactor. The cofactor is Mn(2+).

The protein resides in the cytoplasm. It carries out the reaction (2R,3S)-3-isopropylmalate + NAD(+) = 4-methyl-2-oxopentanoate + CO2 + NADH. It functions in the pathway amino-acid biosynthesis; L-leucine biosynthesis; L-leucine from 3-methyl-2-oxobutanoate: step 3/4. Its function is as follows. Catalyzes the oxidation of 3-carboxy-2-hydroxy-4-methylpentanoate (3-isopropylmalate) to 3-carboxy-4-methyl-2-oxopentanoate. The product decarboxylates to 4-methyl-2 oxopentanoate. The polypeptide is 3-isopropylmalate dehydrogenase (Rhodococcus jostii (strain RHA1)).